Here is a 561-residue protein sequence, read N- to C-terminus: Arginine--tRNA ligase (561 aa).

The short motif at Ala-129–His-139 is the 'HIGH' region element.

Belongs to the class-I aminoacyl-tRNA synthetase family. In terms of assembly, monomer.

It is found in the cytoplasm. The catalysed reaction is tRNA(Arg) + L-arginine + ATP = L-arginyl-tRNA(Arg) + AMP + diphosphate. This chain is Arginine--tRNA ligase, found in Polaromonas sp. (strain JS666 / ATCC BAA-500).